A 159-amino-acid chain; its full sequence is Protein-export protein SecB (159 aa).

The protein belongs to the SecB family. Homotetramer, a dimer of dimers. One homotetramer interacts with 1 SecA dimer.

Its subcellular location is the cytoplasm. Its function is as follows. One of the proteins required for the normal export of preproteins out of the cell cytoplasm. It is a molecular chaperone that binds to a subset of precursor proteins, maintaining them in a translocation-competent state. It also specifically binds to its receptor SecA. This is Protein-export protein SecB from Pseudomonas fluorescens (strain SBW25).